A 956-amino-acid polypeptide reads, in one-letter code: MGTGAADGSRGARRWLPWLGLFFWAAGAAAARGADGSEILPDSIPSAPGTLPHFIEEPEDAYIIKSNPIALRCKARPAMQIFFKCNGEWVHQNEHVSEESLDESSGLKVREVFINVTRQQVEDFHGPEDYWCQCVAWSHLGTSKSRKASVRIAYLRKNFEQDPQGREVPIEGMIVLHCRPPEGVPAAEVEWLKNEEPIDSEQDENIDTRADHNLIIRQARLSDSGNYTCMAANIVAKRRSLSATVVVYVNGGWSSWTEWSACNVRCGRGWQKRSRTCTNPAPLNGGAFCEGMSVQKITCTALCPVDGSWEVWSEWSVCSPECEHLRIRECTAPPPRNGGKFCEGLSQESENCTDGLCILDKKPLHEIKPQRWSRRGIENASDIALYSGLGAAVVAVAVLVIGVTLYRRSHSDYGVDVIDSSALTGGFQTFNFKTVRQGNSLLLNPAMQPDLTVSRTYSGPICLQDPLDKELMTESSLFNPLSDIKVKVQSSFMVSLGVSERAEYHGKNHSGTFPHGNNRGFSTIHPRNKTPYIQNLSSLPTRTELRTTGVFGHLGGRLVMPNTGVSLLIPHGAIPEENSWEIYMSINQGEPSLQSDGSEVLLSPEVTCGPPDMLVTTPFALTIPHCADVSSEHWNIHLKKRTQQGKWEEVMSVEDESTSCYCLLDPFACHVLLDSFGTYALTGEPITDCAVKQLKVAVFGCMSCNSLDYNLRVYCVDNTPCAFQEVISDERHQGGQLLEEPKLLHFKGNTFSLQVSVLDIPPFLWRIKPFTACQEVPFSRVWSSNRQPLHCAFSLERYTPTTTQLSCKICIRQLKGHEQILQVQTSILESERETITFFAQEDSTFPAQTGPKAFKIPYSIRQRICATFDTPNAKGKDWQMLAQKNSINRNLSYFATQSSPSAVILNLWEARHQQDGDLDSLACALEEIGRTHTKLSNITEPQIDDADFNYSRQNGL.

The N-terminal stretch at 1–30 (MGTGAADGSRGARRWLPWLGLFFWAAGAAA) is a signal peptide. Over 31–382 (ARGADGSEIL…SRRGIENASD (352 aa)) the chain is Extracellular. The Ig-like domain occupies 52-149 (PHFIEEPEDA…LGTSKSRKAS (98 aa)). 9 cysteine pairs are disulfide-bonded: Cys-73/Cys-134, Cys-85/Cys-132, Cys-178/Cys-229, Cys-262/Cys-299, Cys-266/Cys-303, Cys-277/Cys-289, Cys-318/Cys-352, Cys-322/Cys-357, and Cys-330/Cys-342. The segment at 89–91 (WVH) is important for interaction with FLRT2. N-linked (GlcNAc...) asparagine glycans are attached at residues Asn-115 and Asn-226. The region spanning 151–242 (RIAYLRKNFE…NIVAKRRSLS (92 aa)) is the Ig-like C2-type domain. TSP type-1 domains lie at 250 to 304 (NGGW…ALCP) and 306 to 358 (DGSW…GLCI). Residues Asn-351 and Asn-379 are each glycosylated (N-linked (GlcNAc...) asparagine). Residues 383–403 (IALYSGLGAAVVAVAVLVIGV) traverse the membrane as a helical segment. Over 404–956 (TLYRRSHSDY…DFNYSRQNGL (553 aa)) the chain is Cytoplasmic. Residues 545 to 685 (LRTTGVFGHL…FGTYALTGEP (141 aa)) enclose the ZU5 domain. In terms of domain architecture, Death spans 862-939 (QRICATFDTP…RTHTKLSNIT (78 aa)).

The protein belongs to the unc-5 family. Interacts (via extracellular domain) with FLRT2 and FLRT3 (via extracellular domain); the interaction is direct. Has higher affinity for FLRT2. Identified in a complex with FLRT3 and ADGRL3; does not interact with ADGRL3 by itself. In terms of processing, proteolytically cleaved by caspases during apoptosis. The cleavage does not take place when the receptor is associated with netrin ligand. Its cleavage by caspases is required to induce apoptosis. In terms of tissue distribution, detected in multipolar cells in the brain subventricular zone (at protein level). Detected in embryonic brain neocortex, especially in the subventricular zone. Detected in multipolar cells in the brain subventricular zone. Detected in brain neocortex from young pups, especially in the somatosensory cortex. Expressed in developing limb and mammary gland.

The protein localises to the cell membrane. In terms of biological role, receptor for the netrin NTN4 that promotes neuronal cell survival. Plays a role in cell-cell adhesion and cell guidance. Receptor for netrin involved in cell migration. Plays a role in the regulation of neuronal cell migration in the developing brain via its interaction with FLRT2. Plays a role in axon guidance by mediating axon repulsion of neuronal growth cones in the developing nervous system upon ligand binding. May play a role in apoptosis in response to DNA damage. It also acts as a dependence receptor required for apoptosis induction when not associated with netrin ligand. Mediates cell-cell adhesion via its interaction with FLRT3 on an adjacent cell. In Mus musculus (Mouse), this protein is Netrin receptor UNC5D (Unc5d).